A 619-amino-acid polypeptide reads, in one-letter code: Manganese lipoxygenase (619 aa).

A signal peptide spans 1-16; it reads MRVLVWIAGLAPLAVA. N-linked (GlcNAc...) asparagine glycans are attached at residues Asn-32, Asn-42, Asn-62, Asn-86, Asn-164, and Asn-229. The region spanning 55–619 is the Lipoxygenase domain; that stretch reads TLPCEDGNST…PGNIPFYLSV (565 aa). Residues His-298, His-303, His-483, and Asn-487 each coordinate Mn(2+). Residues Asn-515 and Asn-549 are each glycosylated (N-linked (GlcNAc...) asparagine). Val-619 serves as a coordination point for Mn(2+).

This sequence belongs to the lipoxygenase family. Manganese lipoxygenase subfamily. The cofactor is Mn(2+).

The protein localises to the secreted. The catalysed reaction is (9Z,12Z)-octadecadienoate + O2 = (9S)-hydroperoxy-(10E,12Z)-octadecadienoate. It carries out the reaction (9Z,12Z)-octadecadienoate + O2 = (11S)-hydroperoxy-(9Z,12Z)-octadecadienoate. It catalyses the reaction (9Z,12Z)-octadecadienoate + O2 = (13R)-hydroperoxy-(9Z,11E)-octadecadienoate. The enzyme catalyses (9Z,12Z,15Z)-octadecatrienoate + O2 = (9S)-hydroperoxy-(10E,12Z,15Z)-octadecatrienoate. The catalysed reaction is (9Z,12Z,15Z)-octadecatrienoate + O2 = (11R)-hydroperoxy-(9Z,12Z,15Z)-octadecatrienoate. It carries out the reaction (9Z,12Z,15Z)-octadecatrienoate + O2 = (13R)-hydroperoxy-(9Z,11E,15Z)-octadecatrienoate. It catalyses the reaction (9S)-hydroperoxy-(10E,12Z,15Z)-octadecatrienoate + O2 = (9S,16S)-dihydroperoxy-(10E,12Z,14E)-octadecatrienoate. Functionally, lipoxygenase that metabolizes linoleic and alpha-linolenic acids to 9S-, 11- and 13R-hydroperoxy fatty acids. At the end of lipoxygenation, the intermediate product 11S-HPODE from linoleic acid is then transformed into 9S-HPODE and 13R-HPODE as the final products. The intermediate product 11R-HPOTrE from alpha-linolenic acid is transformed into 9S-HPOTrE and 13R-HPOTrE as the final products. 9S-HPOTrE is further oxidized by the enzyme to 9S,16S-DiHPOTrE as the end product. In Pyricularia oryzae (strain 70-15 / ATCC MYA-4617 / FGSC 8958) (Rice blast fungus), this protein is Manganese lipoxygenase.